The following is a 366-amino-acid chain: Putative type II methyltransferase M.MjaORF1200P (366 aa).

An SAM-dependent MTase C5-type domain is found at 5 to 366 (LKFIDLFCGC…IARVIKENLK (362 aa)). C133 is a catalytic residue.

This sequence belongs to the class I-like SAM-binding methyltransferase superfamily. C5-methyltransferase family.

It carries out the reaction a 2'-deoxycytidine in DNA + S-adenosyl-L-methionine = a 5-methyl-2'-deoxycytidine in DNA + S-adenosyl-L-homocysteine + H(+). A putative methylase that probably protects DNA from cleavage by the MjaORF1200P endonuclease. This Methanocaldococcus jannaschii (strain ATCC 43067 / DSM 2661 / JAL-1 / JCM 10045 / NBRC 100440) (Methanococcus jannaschii) protein is Putative type II methyltransferase M.MjaORF1200P.